The sequence spans 350 residues: MRVTNRSLKGREGEIAVTAETLDDLWHLKYIIEKGDLVFSVTKRKADSASDKIRPEKVEKVKVRLGIRVDDLEFHKFANRLRLHGMIERGMDVGSYHTLNIEIGTNLSVIKEHWKNDQLQRIKDAEEASKRPKVVMVAIEEGDADIGFVHHYGIEIYSHIRQSSGKRETGLRNEFFREVVEQLRHAVPEEASIVIAGPGFTKEDFIKYFQETEPAMASKALIEDTSMIGMSGFQEVLRRGAVDRIMQESRIARESALMEDLIREISMDGKAAYGLGDVKNALNFGAVETLLVADETLREGREKGEDIDKLLREVEQAQGKVVVFSTAFEPGEKLHKLGGIAALLRFKVRG.

It belongs to the eukaryotic release factor 1 family. Pelota subfamily. Monomer. It depends on a divalent metal cation as a cofactor.

Its subcellular location is the cytoplasm. May function in recognizing stalled ribosomes, interact with stem-loop structures in stalled mRNA molecules, and effect endonucleolytic cleavage of the mRNA. May play a role in the release non-functional ribosomes and degradation of damaged mRNAs. Has endoribonuclease activity. This chain is Protein pelota homolog, found in Methanosarcina barkeri (strain Fusaro / DSM 804).